Here is a 93-residue protein sequence, read N- to C-terminus: CRISPR-associated endoribonuclease Cas2 (93 aa).

Mg(2+) is bound at residue Asp13.

The protein belongs to the CRISPR-associated endoribonuclease Cas2 protein family. As to quaternary structure, homodimer, forms a heterotetramer with a Cas1 homodimer. Mg(2+) is required as a cofactor.

In terms of biological role, CRISPR (clustered regularly interspaced short palindromic repeat), is an adaptive immune system that provides protection against mobile genetic elements (viruses, transposable elements and conjugative plasmids). CRISPR clusters contain sequences complementary to antecedent mobile elements and target invading nucleic acids. CRISPR clusters are transcribed and processed into CRISPR RNA (crRNA). Functions as a ssRNA-specific endoribonuclease. Involved in the integration of spacer DNA into the CRISPR cassette. The sequence is that of CRISPR-associated endoribonuclease Cas2 from Korarchaeum cryptofilum (strain OPF8).